Reading from the N-terminus, the 78-residue chain is UPF0369 protein RF_1112 (78 aa).

It belongs to the SDHAF4 family.

The chain is UPF0369 protein RF_1112 from Rickettsia felis (strain ATCC VR-1525 / URRWXCal2) (Rickettsia azadi).